The sequence spans 351 residues: F-box protein At1g47810 (351 aa).

The 47-residue stretch at 8-54 (LQSLDPIPVDVLFEIFLNLPAKFLARFVCVSKLWAKIIRNQDFIRSF) folds into the F-box domain.

This chain is F-box protein At1g47810, found in Arabidopsis thaliana (Mouse-ear cress).